The primary structure comprises 753 residues: Centromere protein I (753 aa).

Positions 1-15 (MQRRQSSKHSKRPLQ) are enriched in basic residues. Residues 1–54 (MQRRQSSKHSKRPLQVHHSNQTDLSAWRKGGTVDTEKSAQNRQSLSDQKNDNEQ) are disordered.

It belongs to the CENP-I/CTF3 family. Component of the CENPA-HI complex, at least composed of CENPH, CENPI, CENPK, CENPL, CENPM, CENPO and CENPP.

It localises to the nucleus. It is found in the chromosome. The protein localises to the centromere. Functionally, component of the CENPA-HI complex, a centromeric complex involved in assembly of kinetochore proteins, mitotic progression and chromosome segregation. Required for the localization of CENPC but not CENPA to the centromere. It however may be involved in incorporation of newly synthesized CENPA into centromeres via its interaction with the CENPA-NAC complex. In Gallus gallus (Chicken), this protein is Centromere protein I (CENPI).